A 244-amino-acid chain; its full sequence is T-cell immunoreceptor with Ig and ITIM domains (244 aa).

Residues 1–21 form the signal peptide; it reads MRWCLLLIWAQGLRQAPLASG. The 103-residue stretch at 22 to 124 folds into the Ig-like V-type domain; the sequence is MMTGTIETTG…DGTYTGRIFL (103 aa). The Extracellular portion of the chain corresponds to 22–141; sequence MMTGTIETTG…AEHGARFQIP (120 aa). 2 N-linked (GlcNAc...) asparagine glycosylation sites follow: Asn-32 and Asn-101. A homodimerization region spans residues 32–42; the sequence is NISAEKGGSII. An intrachain disulfide couples Cys-45 to Cys-108. A helical transmembrane segment spans residues 142–162; sequence LLGAMAATLVVICTAVIVVVA. The Cytoplasmic segment spans residues 163–244; sequence LTRKKKALRI…GNCSFFTETG (82 aa). Tyr-225 is modified (phosphotyrosine). An ITIM motif motif is present at residues 229–234; sequence LSYRSL.

As to quaternary structure, homodimer in cis; binds with high affinity to PVR, forming a heterotetrameric assembly of two TIGIT and two PVR molecules. Binds with lower affinity to NECTIN2 and NECTIN3. Interacts with GRB2. Interacts with NECTIN4. Expressed at low levels on peripheral memory and regulatory CD4+ T-cells and NK cells and is up-regulated following activation of these cells (at protein level).

It localises to the cell membrane. Inhibitory receptor that plays a role in the modulation of immune responses. Suppresses T-cell activation by promoting the generation of mature immunoregulatory dendritic cells. Upon binding to its ligands PVR/CD155 or NECTIN2/CD112, which are expressed on antigen-presenting cells, sends inhibitory signals to the T-cell or NK cell. Mechanistically, interaction with ligand leads to phosphorylation of the cytoplasmic tail by Src family tyrosine kinases such as FYN or LCK, allowing subsequent binding to adapter GRB2 and SHIP1/INPP5D. In turn, inhibits PI3K and MAPK signaling cascades. In addition, associates with beta-arrestin-2/ARRB2 to recruit SHIP1/INPP5D that suppresses autoubiquitination of TRAF6 and subsequently inhibits NF-kappa-B signaling pathway. Also acts as a receptor for NECTIN4 to inhibit NK cell cytotoxicity. This is T-cell immunoreceptor with Ig and ITIM domains (TIGIT) from Homo sapiens (Human).